Here is a 361-residue protein sequence, read N- to C-terminus: Biotin synthase (361 aa).

Residues 47 to 278 (VHGDEVALCG…AAHIFVMGGR (232 aa)) form the Radical SAM core domain. 3 residues coordinate [4Fe-4S] cluster: Cys65, Cys69, and Cys72. Residues Ser110, Cys143, and Cys203 each contribute to the [2Fe-2S] cluster site. Residues 323 to 361 (TLRPPDTGKPWAFDGHAPSDADWNRKAAEPRPRPLPVVR) are disordered. Positions 339–354 (APSDADWNRKAAEPRP) are enriched in basic and acidic residues.

This sequence belongs to the radical SAM superfamily. Biotin synthase family. Homodimer. It depends on [4Fe-4S] cluster as a cofactor. Requires [2Fe-2S] cluster as cofactor.

The enzyme catalyses (4R,5S)-dethiobiotin + (sulfur carrier)-SH + 2 reduced [2Fe-2S]-[ferredoxin] + 2 S-adenosyl-L-methionine = (sulfur carrier)-H + biotin + 2 5'-deoxyadenosine + 2 L-methionine + 2 oxidized [2Fe-2S]-[ferredoxin]. It participates in cofactor biosynthesis; biotin biosynthesis; biotin from 7,8-diaminononanoate: step 2/2. Catalyzes the conversion of dethiobiotin (DTB) to biotin by the insertion of a sulfur atom into dethiobiotin via a radical-based mechanism. This chain is Biotin synthase, found in Anaeromyxobacter sp. (strain K).